The chain runs to 132 residues: Snaclec bothroinsularin subunit alpha (132 aa).

3 disulfide bridges follow: cysteine 2–cysteine 13, cysteine 30–cysteine 127, and cysteine 102–cysteine 119. Positions 9–128 constitute a C-type lectin domain; sequence YGQYCYKFFQ…CGQQNPFVCK (120 aa).

The protein belongs to the snaclec family. Heterodimer of subunits alpha and beta; disulfide-linked. Expressed by the venom gland.

It is found in the secreted. Thrombin and prothrombin (F2) inhibitor. The IC(50) of thrombin-induced platelet aggregation and fibrinocoagulation is 62 and 35 nM, respectively. Its inhibitory activity is at least 10-fold lower than that observed for other thrombin inhibitors. The protein is Snaclec bothroinsularin subunit alpha of Bothrops insularis (Golden lancehead).